We begin with the raw amino-acid sequence, 299 residues long: Adenylate kinase (299 aa).

The tract at residues 1–30 (MATTTTRGARDSPFPAPSEGEIKKELNMKG) is disordered. 85–90 (GAGKGT) is an ATP binding site. The NMP stretch occupies residues 107–136 (ATGDMLREQVSKQTELGKMAKKIMDQGGLV). Residues Thr-108, Arg-113, 134–136 (GLV), 163–166 (GFPR), and Gln-170 each bind AMP. Residues 204–241 (GRLVHPASGRSYHKEFSPPKKPMTDDVTGEPLIQRSDD) form an LID region. ATP contacts are provided by residues Arg-205 and 214–215 (SY). Residues 212-237 (GRSYHKEFSPPKKPMTDDVTGEPLIQ) are disordered. A compositionally biased stretch (basic and acidic residues) spans 215–227 (YHKEFSPPKKPMT). Residues Arg-238 and Arg-249 each coordinate AMP. Position 277 (Gln-277) interacts with ATP.

The protein belongs to the adenylate kinase family. AK2 subfamily. Monomer.

It localises to the cytoplasm. It is found in the cytosol. Its subcellular location is the mitochondrion intermembrane space. The enzyme catalyses AMP + ATP = 2 ADP. Functionally, catalyzes the reversible transfer of the terminal phosphate group between ATP and AMP. Plays an important role in cellular energy homeostasis and in adenine nucleotide metabolism. Adenylate kinase activity is critical for regulation of the phosphate utilization and the AMP de novo biosynthesis pathways. This is Adenylate kinase from Mycosarcoma maydis (Corn smut fungus).